The primary structure comprises 340 residues: Tetrathionate reductase subunit C (340 aa).

The next 9 helical transmembrane spans lie at 19–39 (WLPWAVQYFFFIGIAACAALF), 57–77 (ALLIAITCAITAPLALTADLH), 94–114 (WMPWGALFLPLFTGFLALWFL), 128–148 (VTKWLALASALCAVGLLIYTG), 164–184 (AFPVAMFLSALQAFFALMIVA), 195–215 (ILWGQIWTLAALGLVVAMWVS), 236–256 (YYAVGWVALWVCTLLFCSLAL), 266–286 (VLLVLSALALCWLMRWTLLIQ), and 306–326 (TDGWLAILGTFGLWIALLIII).

It belongs to the NrfD family. In terms of assembly, probably composed of three subunits: TtrA, TtrB and TtrC.

The protein localises to the cell inner membrane. Its function is as follows. Part of a membrane-bound tetrathionate reductase that catalyzes the reduction of tetrathionate to thiosulfate. TtrC probably anchors TtrA and TtrB to the periplasmic face of the cytoplasmic membrane. May transfer electrons from membrane quinol to TtrB. During mice infection, the ability to use tetrathionate as an electron acceptor is a growth advantage for S.typhimurium over the competing microbiota in the lumen of the inflamed gut. This is Tetrathionate reductase subunit C (ttrC) from Salmonella typhimurium (strain LT2 / SGSC1412 / ATCC 700720).